Here is a 122-residue protein sequence, read N- to C-terminus: Large ribosomal subunit protein uL14c (122 aa).

Belongs to the universal ribosomal protein uL14 family. As to quaternary structure, part of the 50S ribosomal subunit.

It localises to the plastid. The protein resides in the chloroplast. In terms of biological role, binds to 23S rRNA. This chain is Large ribosomal subunit protein uL14c, found in Drimys granadensis.